A 209-amino-acid polypeptide reads, in one-letter code: Chaperone protein TorD (209 aa).

The protein belongs to the TorD/DmsD family. TorD subfamily.

Its subcellular location is the cytoplasm. Functionally, involved in the biogenesis of TorA. Acts on TorA before the insertion of the molybdenum cofactor and, as a result, probably favors a conformation of the apoenzyme that is competent for acquiring the cofactor. The chain is Chaperone protein TorD from Shewanella baltica (strain OS155 / ATCC BAA-1091).